Reading from the N-terminus, the 55-residue chain is uncharacterized protein (55 aa).

The disordered stretch occupies residues 1–30; it reads MDKPTVETSAAPVETLVLTEPPAETQAEDS.

This is an uncharacterized protein from Frog virus 3 (isolate Goorha) (FV-3).